A 170-amino-acid chain; its full sequence is MAILDVLRFPDERLRTVAAPVETFTPELQHIVDDMFETMYAEEGIGLAATQVDIHQRIIVIDVSENREDPLVLINPEILEQAGSTGIEEGCLSVPDHRALVPRAEWVKVRALDRNGQPFELEADDLLAICIQHEMDHLIGKLFVDYLSPLKRQRIRQKLEKMAREDRKAL.

Residues Cys91 and His133 each contribute to the Fe cation site. Glu134 is a catalytic residue. A Fe cation-binding site is contributed by His137.

Belongs to the polypeptide deformylase family. Fe(2+) is required as a cofactor.

It catalyses the reaction N-terminal N-formyl-L-methionyl-[peptide] + H2O = N-terminal L-methionyl-[peptide] + formate. Its function is as follows. Removes the formyl group from the N-terminal Met of newly synthesized proteins. Requires at least a dipeptide for an efficient rate of reaction. N-terminal L-methionine is a prerequisite for activity but the enzyme has broad specificity at other positions. In Aeromonas salmonicida (strain A449), this protein is Peptide deformylase.